The primary structure comprises 793 residues: Probable serine/threonine-protein kinase fnkA (793 aa).

Positions 11-358 constitute a Protein kinase domain; sequence WEILSQLGTG…IINLISHNFI (348 aa). ATP-binding positions include 17 to 25 and lysine 46; that span reads LGTGAFGRV. Aspartate 138 serves as the catalytic Proton acceptor. FNIP repeat units follow at residues 403 to 444, 470 to 514, 515 to 557, 558 to 601, and 691 to 733; these read FNQT…FGAR, YNQP…ILGD, YDQK…LGYR, FNKA…LGYC, and FIRP…LGSR.

The protein belongs to the protein kinase superfamily. STE Ser/Thr protein kinase family. It depends on Mg(2+) as a cofactor.

It carries out the reaction L-seryl-[protein] + ATP = O-phospho-L-seryl-[protein] + ADP + H(+). It catalyses the reaction L-threonyl-[protein] + ATP = O-phospho-L-threonyl-[protein] + ADP + H(+). This is Probable serine/threonine-protein kinase fnkA from Dictyostelium discoideum (Social amoeba).